Reading from the N-terminus, the 357-residue chain is Protein NDRG2 (357 aa).

The segment at 1–28 (MAELQEVQITEEKPLLPGQTPEAAKTHS) is disordered. An N-acetylalanine modification is found at Ala-2. Thr-20 is subject to Phosphothreonine. 2 positions are modified to phosphoserine: Ser-312 and Ser-314. At Thr-316 the chain carries Phosphothreonine. Ser-318 is modified (phosphoserine). Phosphothreonine is present on Thr-320. A disordered region spans residues 320–357 (TSAASVDGNRSRSRTLSQSSESGTLSSGPPGHTMEVSC). Residues Ser-321, Ser-324, and Ser-330 each carry the phosphoserine modification. The segment covering 333–347 (RTLSQSSESGTLSSG) has biased composition (low complexity). A Phosphothreonine modification is found at Thr-334. 4 positions are modified to phosphoserine: Ser-336, Ser-338, Ser-339, and Ser-341. The residue at position 343 (Thr-343) is a Phosphothreonine. At Ser-356 the chain carries Phosphoserine.

Belongs to the NDRG family. In terms of assembly, interacts with CTNNB1.

The protein localises to the cytoplasm. It localises to the perinuclear region. The protein resides in the cell projection. It is found in the growth cone. Functionally, contributes to the regulation of the Wnt signaling pathway. Down-regulates CTNNB1-mediated transcriptional activation of target genes, such as CCND1, and may thereby act as tumor suppressor. May be involved in dendritic cell and neuron differentiation. The chain is Protein NDRG2 (NDRG2) from Pan troglodytes (Chimpanzee).